The sequence spans 136 residues: Large ribosomal subunit protein uL16 (136 aa).

Belongs to the universal ribosomal protein uL16 family. In terms of assembly, part of the 50S ribosomal subunit.

Its function is as follows. Binds 23S rRNA and is also seen to make contacts with the A and possibly P site tRNAs. The polypeptide is Large ribosomal subunit protein uL16 (Pseudoalteromonas atlantica (strain T6c / ATCC BAA-1087)).